The chain runs to 329 residues: GMP reductase (329 aa).

Catalysis depends on cysteine 178, which acts as the Thioimidate intermediate. Residue valine 207–valine 230 participates in NADP(+) binding.

Belongs to the IMPDH/GMPR family. GuaC type 2 subfamily.

The catalysed reaction is IMP + NH4(+) + NADP(+) = GMP + NADPH + 2 H(+). Its function is as follows. Catalyzes the irreversible NADPH-dependent deamination of GMP to IMP. It functions in the conversion of nucleobase, nucleoside and nucleotide derivatives of G to A nucleotides, and in maintaining the intracellular balance of A and G nucleotides. This is GMP reductase from Lactococcus lactis subsp. cremoris (strain SK11).